The primary structure comprises 455 residues: E3 ubiquitin-protein ligase IPI1 (455 aa).

A disordered region spans residues 1-42 (MGAEEEEEPASAVGREGGGGGGGARAAGAGAGGDTADDDDSG). Over residues 15–33 (REGGGGGGGARAAGAGAGG) the composition is skewed to gly residues. The RING-type; atypical zinc-finger motif lies at 51–97 (CSICLDAVVAGGGDRSTARLQCGHEFHLDCIGSAFNAKGVMQCPNCR). Disordered stretches follow at residues 286–311 (LDSD…SRIP) and 426–455 (QWIG…IPRM). Residues 433–442 (SPPPPPPPPA) are compositionally biased toward pro residues.

Interacts with SPL14/IPA1.

The protein localises to the nucleus. The catalysed reaction is S-ubiquitinyl-[E2 ubiquitin-conjugating enzyme]-L-cysteine + [acceptor protein]-L-lysine = [E2 ubiquitin-conjugating enzyme]-L-cysteine + N(6)-ubiquitinyl-[acceptor protein]-L-lysine.. The protein operates within protein modification; protein ubiquitination. In terms of biological role, functions as an E3 ligase that promotes polyubiquitination of SPL14/IPA1 for subsequent proteasomal degradation. Regulates plant architecture by modulating SPL14/IPA1 abundance. Promotes the degradation of SPL14/IPA1 in panicles, while it stabilizes SPL14/IPA1 in shoot apices. Ubiquitinates the SPL14/IPA1-mediated complex with 'Lys-48'-linked polyubiquitin in panicles and 'Lys-63'-linked polyubiquitin chains in the shoot apex. This is E3 ubiquitin-protein ligase IPI1 from Oryza sativa subsp. japonica (Rice).